We begin with the raw amino-acid sequence, 513 residues long: Putative ribose/galactose/methyl galactoside import ATP-binding protein 3 (513 aa).

2 consecutive ABC transporter domains span residues 15-252 and 263-508; these read IELT…VGRQ and TSAN…TQRE. 47 to 54 contributes to the ATP binding site; sequence GENGAGKS.

The protein belongs to the ABC transporter superfamily. Carbohydrate importer 2 (CUT2) (TC 3.A.1.2) family.

It is found in the cell inner membrane. The enzyme catalyses D-ribose(out) + ATP + H2O = D-ribose(in) + ADP + phosphate + H(+). It carries out the reaction D-galactose(out) + ATP + H2O = D-galactose(in) + ADP + phosphate + H(+). Functionally, part of an ABC transporter complex involved in carbohydrate import. Could be involved in ribose, galactose and/or methyl galactoside import. Responsible for energy coupling to the transport system. The polypeptide is Putative ribose/galactose/methyl galactoside import ATP-binding protein 3 (Burkholderia ambifaria (strain ATCC BAA-244 / DSM 16087 / CCUG 44356 / LMG 19182 / AMMD) (Burkholderia cepacia (strain AMMD))).